The following is a 132-amino-acid chain: Long-chain acyl-CoA thioesterase FadM (132 aa).

The active site involves aspartate 13.

It belongs to the 4-hydroxybenzoyl-CoA thioesterase family. In terms of assembly, homotetramer.

It carries out the reaction (3E,5Z)-tetradecadienoyl-CoA + H2O = (3E,5Z)-tetradecadienoate + CoA + H(+). It catalyses the reaction (3E,5Z)-dodecadienoyl-CoA + H2O = (3E,5Z)-dodecadienoate + CoA + H(+). The catalysed reaction is (9Z)-octadecenoyl-CoA + H2O = (9Z)-octadecenoate + CoA + H(+). The enzyme catalyses octadecanoyl-CoA + H2O = octadecanoate + CoA + H(+). It carries out the reaction hexadecanoyl-CoA + H2O = hexadecanoate + CoA + H(+). It catalyses the reaction (3S)-hydroxytetradecanoyl-CoA + H2O = (3S)-hydroxytetradecanoate + CoA + H(+). The catalysed reaction is tetradecanoyl-CoA + H2O = tetradecanoate + CoA + H(+). Functionally, long-chain acyl-CoA thioesterase that could be involved in beta-oxidation of fatty acids. Is most active with 3,5-tetradecadienoyl-CoA, a metabolite of oleic acid that is hydrolyzed during oleate beta-oxidation, but can also use other substrates such as 3,5-dodecadienoyl-CoA, 9-cis-octadecenoyl-CoA, octadecanoyl-CoA, hexadecanoyl-CoA, 3-hydroxytetradecanoyl-CoA and tetradecanoyl-CoA. The protein is Long-chain acyl-CoA thioesterase FadM of Escherichia coli (strain K12).